The chain runs to 723 residues: Protein Aster-A (723 aa).

Positions 1 to 18 are enriched in low complexity; that stretch reads MFDTTPHSGRSSPSSSPS. Positions 1-63 are disordered; the sequence is MFDTTPHSGR…SGVSGTLSTQ (63 aa). A compositionally biased stretch (pro residues) spans 28–38; that stretch reads PSRPPSAPEPE. Positions 93–160 constitute a GRAM domain; that stretch reads EDFRKLFSKL…KEVTCLKKEK (68 aa). Positions 257–337 are disordered; it reads SPSGAADRSQ…DGPTSNLGPL (81 aa). A phosphoserine mark is found at serine 265, serine 269, and serine 273. The segment covering 302-314 has biased composition (polar residues); it reads DSQLDASSSQTVT. The region spanning 370–541 is the VASt domain; it reads SGRLLINSVF…ELAKAEKVSL (172 aa). At serine 418 the chain carries Phosphoserine. Residues 562–601 form a disordered region; it reads LSWRGHRDGPQHPDPDPCTQTSMHTSGSLSSRFSEPSVDQ. Residues 566–576 are compositionally biased toward basic and acidic residues; it reads GHRDGPQHPDP. Over residues 579–595 the composition is skewed to polar residues; the sequence is CTQTSMHTSGSLSSRFS. Residues 610–630 traverse the membrane as a helical segment; sequence ALVLISIVLIVLIALNALLFY.

The protein localises to the endoplasmic reticulum membrane. Its subcellular location is the cell membrane. The protein resides in the cytoplasmic vesicle. It localises to the autophagosome. In terms of biological role, cholesterol transporter that mediates non-vesicular transport of cholesterol from the plasma membrane (PM) to the endoplasmic reticulum (ER). Contains unique domains for binding cholesterol and the PM, thereby serving as a molecular bridge for the transfer of cholesterol from the PM to the ER. Plays a crucial role in cholesterol homeostasis and has the unique ability to localize to the PM based on the level of membrane cholesterol. In lipid-poor conditions localizes to the ER membrane and in response to excess cholesterol in the PM is recruited to the endoplasmic reticulum-plasma membrane contact sites (EPCS) which is mediated by the GRAM domain. At the EPCS, the sterol-binding VASt/ASTER domain binds to the cholesterol in the PM and facilitates its transfer from the PM to ER. May play a role in tumor progression. Plays a role in autophagy regulation and is required for biogenesis of the autophagosome. This function in autophagy requires its cholesterol-transfer activity. This is Protein Aster-A from Rattus norvegicus (Rat).